We begin with the raw amino-acid sequence, 277 residues long: Translation initiation factor 2 subunit alpha (277 aa).

Positions 22 to 93 constitute an S1 motif domain; sequence GEIVVGTVQE…KRGQVDVSLK (72 aa).

It belongs to the eIF-2-alpha family. In terms of assembly, heterotrimer composed of an alpha, a beta and a gamma chain.

In terms of biological role, eIF-2 functions in the early steps of protein synthesis by forming a ternary complex with GTP and initiator tRNA. The sequence is that of Translation initiation factor 2 subunit alpha (eif2a) from Aeropyrum pernix (strain ATCC 700893 / DSM 11879 / JCM 9820 / NBRC 100138 / K1).